The sequence spans 115 residues: MPPIIPLNLTLSHILGRIQRKYPNATIDAQRISAHMGEFRVLECYFNMTRVAIRAITYPQDENGKESCASGEVHYHWACFCGVSPNLQVYIIHYKPSGNNVQQKKKNNENLAVRK.

This is an uncharacterized protein from Caenorhabditis elegans.